The following is a 131-amino-acid chain: Methyl-coenzyme M reductase operon protein D (131 aa).

As to quaternary structure, MCR is composed of three subunits: alpha, beta, and gamma. The function of proteins C and D is not known.

In Methanothermus fervidus, this protein is Methyl-coenzyme M reductase operon protein D (mcrD).